A 601-amino-acid chain; its full sequence is UBA domain-containing protein 3 (601 aa).

Residues glutamate 7–asparagine 129 enclose the Arf-GAP domain. 2 disordered regions span residues aspartate 123–tyrosine 158 and glutamate 289–glycine 310. Positions threonine 139–serine 156 are enriched in low complexity. In terms of domain architecture, UBA spans arginine 157 to histidine 197.

This Schizosaccharomyces pombe (strain 972 / ATCC 24843) (Fission yeast) protein is UBA domain-containing protein 3 (ucp3).